The chain runs to 171 residues: Co-chaperone protein HscB homolog (171 aa).

The 73-residue stretch at 2–74 folds into the J domain; the sequence is NHFELFGLPL…ISRAEYLLVQ (73 aa).

This sequence belongs to the HscB family. Interacts with HscA and stimulates its ATPase activity.

Co-chaperone involved in the maturation of iron-sulfur cluster-containing proteins. Seems to help targeting proteins to be folded toward HscA. The chain is Co-chaperone protein HscB homolog from Vibrio atlanticus (strain LGP32) (Vibrio splendidus (strain Mel32)).